Reading from the N-terminus, the 715-residue chain is Methylcrotonoyl-CoA carboxylase subunit alpha, mitochondrial (715 aa).

Residues 1–38 (MAAAALLAAVDRNQLRRVPILLLQPREWPWKHRTVKYG) constitute a mitochondrion transit peptide. The region spanning 45 to 490 (ITKVLIANRG…HTDFIPQHHK (446 aa)) is the Biotin carboxylation domain. K159 is an ATP binding site. The ATP-grasp domain maps to 163–360 (KSIMAAAGVP…LVEWQLRIAA (198 aa)). An N6-acetyllysine modification is found at K193. ATP is bound by residues K201 and 207-208 (GG). Residue K233 is modified to N6-acetyllysine. Positions 251, 278, and 318 each coordinate ATP. The active site involves R335. Position 490 is an N6-acetyllysine (K490). The residue at position 577 (K577) is an N6-acetyllysine; alternate. The residue at position 577 (K577) is an N6-succinyllysine; alternate. The Biotinyl-binding domain occupies 622–711 (SIEVGIPVPK…NRHAPLVEFE (90 aa)). K677 carries the post-translational modification N6-biotinyllysine.

Probably a dodecamer composed of six biotin-containing alpha subunits (MCCC1) and six beta (MCCC2) subunits. Interacts (via the biotin carboxylation domain) with SIRT4. It depends on biotin as a cofactor. Acetylated.

Its subcellular location is the mitochondrion matrix. The catalysed reaction is 3-methylbut-2-enoyl-CoA + hydrogencarbonate + ATP = 3-methyl-(2E)-glutaconyl-CoA + ADP + phosphate + H(+). The protein operates within amino-acid degradation; L-leucine degradation; (S)-3-hydroxy-3-methylglutaryl-CoA from 3-isovaleryl-CoA: step 2/3. Its function is as follows. Biotin-attachment subunit of the 3-methylcrotonyl-CoA carboxylase, an enzyme that catalyzes the conversion of 3-methylcrotonyl-CoA to 3-methylglutaconyl-CoA, a critical step for leucine and isovaleric acid catabolism. The sequence is that of Methylcrotonoyl-CoA carboxylase subunit alpha, mitochondrial from Rattus norvegicus (Rat).